A 490-amino-acid chain; its full sequence is Subtilisin-like protease 8 (490 aa).

The signal sequence occupies residues methionine 1–glutamine 26. A propeptide spanning residues asparagine 27–threonine 134 is cleaved from the precursor. The 92-residue stretch at serine 43–threonine 134 folds into the Inhibitor I9 domain. Residues proline 144–isoleucine 450 form the Peptidase S8 domain. Active-site charge relay system residues include aspartate 180 and histidine 212. N-linked (GlcNAc...) asparagine glycosylation occurs at asparagine 282. Catalysis depends on serine 378, which acts as the Charge relay system. The N-linked (GlcNAc...) asparagine glycan is linked to asparagine 456.

This sequence belongs to the peptidase S8 family.

It localises to the secreted. In terms of biological role, secreted subtilisin-like serine protease with keratinolytic activity that contributes to pathogenicity. The chain is Subtilisin-like protease 8 (SUB8) from Trichophyton verrucosum (strain HKI 0517).